A 201-amino-acid chain; its full sequence is Large ribosomal subunit protein uL4 (201 aa).

The tract at residues 42–67 (GNSAQKTRSEVSGGGKKPWNQKGTGR) is disordered.

It belongs to the universal ribosomal protein uL4 family. As to quaternary structure, part of the 50S ribosomal subunit.

One of the primary rRNA binding proteins, this protein initially binds near the 5'-end of the 23S rRNA. It is important during the early stages of 50S assembly. It makes multiple contacts with different domains of the 23S rRNA in the assembled 50S subunit and ribosome. In terms of biological role, forms part of the polypeptide exit tunnel. In Legionella pneumophila (strain Paris), this protein is Large ribosomal subunit protein uL4.